The chain runs to 293 residues: Glycine--tRNA ligase alpha subunit (293 aa).

This sequence belongs to the class-II aminoacyl-tRNA synthetase family. As to quaternary structure, tetramer of two alpha and two beta subunits.

It localises to the cytoplasm. It catalyses the reaction tRNA(Gly) + glycine + ATP = glycyl-tRNA(Gly) + AMP + diphosphate. The protein is Glycine--tRNA ligase alpha subunit of Wolinella succinogenes (strain ATCC 29543 / DSM 1740 / CCUG 13145 / JCM 31913 / LMG 7466 / NCTC 11488 / FDC 602W) (Vibrio succinogenes).